Here is a 342-residue protein sequence, read N- to C-terminus: Alternative oxidase, mitochondrial (342 aa).

Residues 1-20 (MIKTYQYRSILNSRNVGIRF) constitute a mitochondrion transit peptide. A helical membrane pass occupies residues 135-155 (LTRCIFLESVAGVPGMVAAFI). 3 residues coordinate Fe cation: Glu-142, Glu-181, and His-184. The helical transmembrane segment at 200 to 220 (FIIYMGQGVFANLFFLVYLIK) threads the bilayer. Glu-232, Glu-287, and His-290 together coordinate Fe cation. Basic and acidic residues-rich tracts occupy residues 308 to 321 (PFAL…KEQQ) and 330 to 342 (PHPE…QMRL). Positions 308–342 (PFALKVEDVPKEQQPDEYSLKTPHPEGWNREQMRL) are disordered.

The protein belongs to the alternative oxidase family. In terms of assembly, homodimer; disulfide-linked. The cofactor is Fe cation.

It is found in the mitochondrion inner membrane. Catalyzes cyanide-resistant oxygen consumption. May increase respiration when the cytochrome respiratory pathway is restricted, or in response to low temperatures. The sequence is that of Alternative oxidase, mitochondrial (AOX1) from Wickerhamomyces anomalus (Yeast).